The sequence spans 324 residues: Methyltransferase pytC (324 aa).

Residues 1–28 (MTVRTAAEPPNRIEVDMDAPSLDTDSSC) are disordered.

Belongs to the methyltransferase superfamily. LaeA methyltransferase family.

The protein operates within secondary metabolite biosynthesis. Methyltransferase; part of the gene cluster that mediates the biosynthesis of pyranterreones, a family of antioxidative compounds. The first step of pyranonigrins biosynthesis is performed by the hybrid PKS-NRPS synthetase pytA that condenses 4 malonyl-CoA units ato the acetyl starter unit by the modular PKS of pytA. The acyl chain is then connected to an L-serine through the amide bond by the modular NRPS of pytA. A tetramic acid is formed and released from the PKS-NRPS pytA to give pyranterreone 5 with the help of the thioesterase pytI. Pyranterreone 5 could be methylated by pytC to afford pyranterreone 6. Both pyranterreones 5 and 6 are subsequently oxidized by the FAD-linked oxidoreductase pytB and the cytochrome P450 monooxygenase pytD to form the fused gamma-pyrone core, resulting in pyranterreones 7 and 11, respectively. The hydroxy group at C-8 of pyranterreones 7 and 11 are dehydrated by the aspartyl protease pytH to form a delta-7 double bond to give pyranterreones 3 and 1, 2 accordingly. The exo-methylene of pyranterreone 3 could be reduced into a pendant methyl by reductase pytE to provide pyranterreone 4, also known as cordylactam. Pyranterreone 4 can be reconverted to pyranterreone 3 through pytB-catalyzed dehydrogenation or further oxidized to pyranterreones 9 and 10. This is Methyltransferase pytC from Aspergillus terreus.